Consider the following 220-residue polypeptide: Protein-methionine-sulfoxide reductase heme-binding subunit MsrQ (220 aa).

Helical transmembrane passes span 20–40 (IWLL…LGAS), 52–72 (EHTL…VTPI), 86–106 (ALGL…MVLD), 122–142 (PFIT…LTSN), and 159–179 (LVYV…KSWP).

Belongs to the MsrQ family. In terms of assembly, heterodimer of a catalytic subunit (MsrP) and a heme-binding subunit (MsrQ). The cofactor is FMN. Heme b is required as a cofactor.

Its subcellular location is the cell inner membrane. In terms of biological role, part of the MsrPQ system that repairs oxidized periplasmic proteins containing methionine sulfoxide residues (Met-O), using respiratory chain electrons. Thus protects these proteins from oxidative-stress damage caused by reactive species of oxygen and chlorine generated by the host defense mechanisms. MsrPQ is essential for the maintenance of envelope integrity under bleach stress, rescuing a wide series of structurally unrelated periplasmic proteins from methionine oxidation. MsrQ provides electrons for reduction to the reductase catalytic subunit MsrP, using the quinone pool of the respiratory chain. This Brucella anthropi (strain ATCC 49188 / DSM 6882 / CCUG 24695 / JCM 21032 / LMG 3331 / NBRC 15819 / NCTC 12168 / Alc 37) (Ochrobactrum anthropi) protein is Protein-methionine-sulfoxide reductase heme-binding subunit MsrQ.